A 184-amino-acid polypeptide reads, in one-letter code: Cytidylate kinase (184 aa).

8 to 16 (GQPGSGKTT) provides a ligand contact to ATP.

This sequence belongs to the cytidylate kinase family. Type 2 subfamily.

Its subcellular location is the cytoplasm. The catalysed reaction is CMP + ATP = CDP + ADP. The enzyme catalyses dCMP + ATP = dCDP + ADP. In Pyrobaculum neutrophilum (strain DSM 2338 / JCM 9278 / NBRC 100436 / V24Sta) (Thermoproteus neutrophilus), this protein is Cytidylate kinase.